Here is a 611-residue protein sequence, read N- to C-terminus: Menin (611 aa).

The segment at 214-390 (GVAERSWLYL…SLLETGEERT (177 aa)) is interaction with FANCD2. Residues 460 to 553 (REAEAAEAEE…SPPPEGPVLT (94 aa)) form a disordered region. Residues 484 to 500 (RRESKPEEPPPPKKPAL) show a composition bias toward basic and acidic residues. Residues S487 and S544 each carry the phosphoserine modification. T595 is modified (phosphothreonine).

As to quaternary structure, component of the MLL-HCF complex, at least composed of KMT2A/MLL1, MEN1, ASH2L, RBBP5, DPY30, WDR5, HCFC1 and HCFC2. Component of the menin-associated histone methyltransferase complex, at least composed of KMT2B/MLL4, MEN1, ASH2L, RBBP5, DPY30 and WDR5. Interacts with POLR2B. Interacts with POLR2A phosphorylated at 'Ser-5', but not with the unphosphorylated, nor 'Ser-2' phosphorylated POLR2A forms. Interacts with FANCD2 and DBF4. Interacts with SMAD3, but not with SMAD2, nor SMAD4. Directly interacts with NFKB1, NFKB2 and RELA. Interacts with JUND (via MBM motif); inhibits the interaction of JUND with MAPK10 and the phosphorylation of JUND by MAP kinases MAPK8 and MAPK10. Interacts with KMT2A (via MBM motif). The KMT2A-MEN1 complex interacts with PSIP1 with a greater affinity as MEN1 enhances interaction of KMT2A with PSIP1. As to expression, widely expressed, with high levels in hippocampus, cerebral cortex, testis and thymus (at protein level). Also expressed at high levels in pancreatic islets, ovary and bone marrow. In the brain, highest expression in hippocampus pyramidal nerve cells (at protein level). In the testis, may be expressed in spermatogonia (at protein level). Low expression, if any, in skeletal muscle.

The protein resides in the nucleus. Essential component of a MLL/SET1 histone methyltransferase (HMT) complex, a complex that specifically methylates 'Lys-4' of histone H3 (H3K4). Functions as a transcriptional regulator. Binds to the TERT promoter and represses telomerase expression. Plays a role in TGFB1-mediated inhibition of cell-proliferation, possibly regulating SMAD3 transcriptional activity. Represses JUND-mediated transcriptional activation on AP1 sites, as well as that mediated by NFKB subunit RELA. Positively regulates HOXC8 and HOXC6 gene expression. May be involved in normal hematopoiesis through the activation of HOXA9 expression. May be involved in DNA repair. The sequence is that of Menin (Men1) from Mus musculus (Mouse).